The following is a 203-amino-acid chain: Protein GrpE (203 aa).

Belongs to the GrpE family. In terms of assembly, homodimer.

It is found in the cytoplasm. In terms of biological role, participates actively in the response to hyperosmotic and heat shock by preventing the aggregation of stress-denatured proteins, in association with DnaK and GrpE. It is the nucleotide exchange factor for DnaK and may function as a thermosensor. Unfolded proteins bind initially to DnaJ; upon interaction with the DnaJ-bound protein, DnaK hydrolyzes its bound ATP, resulting in the formation of a stable complex. GrpE releases ADP from DnaK; ATP binding to DnaK triggers the release of the substrate protein, thus completing the reaction cycle. Several rounds of ATP-dependent interactions between DnaJ, DnaK and GrpE are required for fully efficient folding. The sequence is that of Protein GrpE from Pseudoalteromonas translucida (strain TAC 125).